Consider the following 362-residue polypeptide: NAC domain-containing protein 5 (362 aa).

In terms of domain architecture, NAC spans 3 to 151 (NPVGFRFRPT…TYTLCKVKFK (149 aa)). The DNA-binding element occupies 107 to 157 (IGEKRVLVFKNHGGSKSDWAMHEYHATFSSPNQIMTYTLCKVKFKGERREF). Positions 240–266 (DDRNNHTPQKPLTGVFSDHSTDGSDSD) are disordered.

It localises to the nucleus. This chain is NAC domain-containing protein 5 (NAC005), found in Arabidopsis thaliana (Mouse-ear cress).